A 426-amino-acid polypeptide reads, in one-letter code: C4-dicarboxylate transport protein (426 aa).

8 consecutive transmembrane segments (helical) span residues 4–24, 44–64, 76–96, 142–162, 184–204, 222–242, 326–346, and 352–372; these read SIFTSLYLQVLVAITIGILLG, LIKMIIAPVIFCTVVTGIAGM, IALLYFEVVSTIALIIGLVVV, IGAFASGNILQVLLFAVMFGF, VIFGVINMIMKLAPIGAFGAM, LILCFYITCALFVVLVLGSIA, IWHQVTLLVVLLLSSKGAAGV, and IVLAATLSAVGHLPVAGLALI.

This sequence belongs to the dicarboxylate/amino acid:cation symporter (DAACS) (TC 2.A.23) family.

It is found in the cell inner membrane. In terms of biological role, responsible for the transport of dicarboxylates such as succinate, fumarate, and malate from the periplasm across the membrane. This Edwardsiella ictaluri (strain 93-146) protein is C4-dicarboxylate transport protein.